The chain runs to 704 residues: MQDERPVDQLTEAEAAAELARLAEAIEAANTAYHTHDAPQISDADYDALRLRNRAIEEQFPELRRSDSPSDRVGGALAEGFAKVRHEVRMLSLENAFDLAEVEDWIERIRRYLGHVGDLLFTAEPKIDGLSLSLRYEKGRLVQAATRGDGETGENVTENARTIADLPTELDGAPDLLEVRGEVYMSHEDFAALNGRQEAAGQRLFANPRNAAAGSLRQLDPAVTASRPLRFFAYAWGAHSEPLAATQHEAIARLAALGFTTNPLTRLCTGPEELLAQHAEIERQRAALGYDIDGVVYKVDDLALQRRLGFRASTPRWAIAHKFAAQLAWTQLEGIDVQVGRTGALSPVARLKPVTVGGVVVANATLHNEDYIAGRDSKGQEIRGGKDIRVGDWVQVYRAGDVIPKVADVDLDRRPEGAAPYRFPETCPECGSEAIREPGDSVRRCTGGLICPAQQVERLKHFVSRAAFDIEGLGAKQVEALWRDGWIRQPADIFELPNRYREGIQRLENREGWGRKSAENLFAAIEARRRIALHRLIFALGIRHVGETTATLLATHYGSWAAFEAAMTRAEVGAGPEWQDLLSIDGVGAVLATSLVTAFHQEAERAAVEALAAHLTVEDAEVRAPVASPVAGRIVVFTGTLEKMSRAEAKARAEALGAKVSGSVSARTDLVVAGPGAGSKAKQAAALGIETIDEDGWLRLIGDA.

NAD(+)-binding positions include 43-47 (DADYD), 92-93 (SL), and E124. The N6-AMP-lysine intermediate role is filled by K126. R147, E182, K298, and K322 together coordinate NAD(+). C427, C430, C445, and C451 together coordinate Zn(2+). The 80-residue stretch at 625-704 (PVASPVAGRI…DGWLRLIGDA (80 aa)) folds into the BRCT domain.

The protein belongs to the NAD-dependent DNA ligase family. LigA subfamily. It depends on Mg(2+) as a cofactor. The cofactor is Mn(2+).

It catalyses the reaction NAD(+) + (deoxyribonucleotide)n-3'-hydroxyl + 5'-phospho-(deoxyribonucleotide)m = (deoxyribonucleotide)n+m + AMP + beta-nicotinamide D-nucleotide.. Its function is as follows. DNA ligase that catalyzes the formation of phosphodiester linkages between 5'-phosphoryl and 3'-hydroxyl groups in double-stranded DNA using NAD as a coenzyme and as the energy source for the reaction. It is essential for DNA replication and repair of damaged DNA. This is DNA ligase from Cereibacter sphaeroides (strain KD131 / KCTC 12085) (Rhodobacter sphaeroides).